The following is a 93-amino-acid chain: Small ribosomal subunit protein uS19 (93 aa).

It belongs to the universal ribosomal protein uS19 family.

Its function is as follows. Protein S19 forms a complex with S13 that binds strongly to the 16S ribosomal RNA. The chain is Small ribosomal subunit protein uS19 from Nitratidesulfovibrio vulgaris (strain ATCC 29579 / DSM 644 / CCUG 34227 / NCIMB 8303 / VKM B-1760 / Hildenborough) (Desulfovibrio vulgaris).